Reading from the N-terminus, the 186-residue chain is Elongation factor P (186 aa).

It belongs to the elongation factor P family.

It is found in the cytoplasm. Its pathway is protein biosynthesis; polypeptide chain elongation. In terms of biological role, involved in peptide bond synthesis. Stimulates efficient translation and peptide-bond synthesis on native or reconstituted 70S ribosomes in vitro. Probably functions indirectly by altering the affinity of the ribosome for aminoacyl-tRNA, thus increasing their reactivity as acceptors for peptidyl transferase. The chain is Elongation factor P from Shewanella halifaxensis (strain HAW-EB4).